We begin with the raw amino-acid sequence, 230 residues long: Thymidylate kinase (230 aa).

ATP is bound at residue 23-30 (GIDGAGKT).

This sequence belongs to the thymidylate kinase family.

The catalysed reaction is dTMP + ATP = dTDP + ADP. Its function is as follows. Phosphorylation of dTMP to form dTDP in both de novo and salvage pathways of dTTP synthesis. The polypeptide is Thymidylate kinase (Ureaplasma parvum serovar 3 (strain ATCC 27815 / 27 / NCTC 11736)).